Reading from the N-terminus, the 303-residue chain is Probable 5-dehydro-4-deoxyglucarate dehydratase (303 aa).

It belongs to the DapA family.

The catalysed reaction is 5-dehydro-4-deoxy-D-glucarate + H(+) = 2,5-dioxopentanoate + CO2 + H2O. Its pathway is carbohydrate acid metabolism; D-glucarate degradation; 2,5-dioxopentanoate from D-glucarate: step 2/2. In Acinetobacter baumannii (strain SDF), this protein is Probable 5-dehydro-4-deoxyglucarate dehydratase.